The chain runs to 119 residues: Ribonuclease P protein component (119 aa).

It belongs to the RnpA family. Consists of a catalytic RNA component (M1 or rnpB) and a protein subunit.

It catalyses the reaction Endonucleolytic cleavage of RNA, removing 5'-extranucleotides from tRNA precursor.. Functionally, RNaseP catalyzes the removal of the 5'-leader sequence from pre-tRNA to produce the mature 5'-terminus. It can also cleave other RNA substrates such as 4.5S RNA. The protein component plays an auxiliary but essential role in vivo by binding to the 5'-leader sequence and broadening the substrate specificity of the ribozyme. The polypeptide is Ribonuclease P protein component (Serratia proteamaculans (strain 568)).